A 411-amino-acid polypeptide reads, in one-letter code: Probable protein S-acyltransferase 2 (411 aa).

A run of 2 helical transmembrane segments spans residues 56 to 76 (LTTA…VFLI) and 85 to 105 (SLIL…LFLT). Residues 160 to 210 (KFCDTCLLYRPPRASHCSICNNCVQRFDHHCPWVGQCIALRNYPYFICFIS) form the DHHC domain. Catalysis depends on C190, which acts as the S-palmitoyl cysteine intermediate. 2 helical membrane passes run 205–225 (FICF…FSWV) and 245–265 (FVVL…LTVF). S405 bears the Phosphoserine mark.

This sequence belongs to the DHHC palmitoyltransferase family. In terms of tissue distribution, expressed in flowers and pollen.

It localises to the cytoplasmic vesicle membrane. The enzyme catalyses L-cysteinyl-[protein] + hexadecanoyl-CoA = S-hexadecanoyl-L-cysteinyl-[protein] + CoA. Functionally, palmitoyl acyltransferase. The protein is Probable protein S-acyltransferase 2 (PAT02) of Arabidopsis thaliana (Mouse-ear cress).